The following is a 435-amino-acid chain: GPI-anchor transamidase component PIGU (435 aa).

Topologically, residues methionine 1–alanine 3 are cytoplasmic. Residues proline 4–serine 22 traverse the membrane as a helical segment. The Lumenal segment spans residues serine 23–aspartate 78. A helical transmembrane segment spans residues tyrosine 79–isoleucine 99. The Cytoplasmic segment spans residues glutamine 100–isoleucine 136. 4 consecutive transmembrane segments (helical) span residues proline 137–serine 158, threonine 159–serine 178, valine 179–leucine 194, and tyrosine 195–leucine 205. At tyrosine 206–phenylalanine 222 the chain is on the cytoplasmic side. A cardiolipin is bound at residue lysine 216. A helical transmembrane segment spans residues tryptophan 223–serine 244. Residues phenylalanine 245 to serine 286 lie on the Lumenal side of the membrane. The helical transmembrane segment at leucine 287–isoleucine 306 threads the bilayer. Residues lysine 307–histidine 311 are Cytoplasmic-facing. Lysine 309 contributes to the a cardiolipin binding site. Transmembrane regions (helical) follow at residues proline 312–threonine 331 and valine 332–tryptophan 345. The Cytoplasmic portion of the chain corresponds to asparagine 346 to asparagine 354. A helical membrane pass occupies residues valine 355–leucine 372. The Lumenal segment spans residues tryptophan 373–serine 384. A 2-acyl-6-[6-phosphoethanolamine-alpha-D-mannosyl-(1-&gt;2)-6-phosphoethanolamine-alpha-D-mannosyl-(1-&gt;6)-2-phosphoethanolamine-alpha-D-mannosyl-(1-&gt;4)-alpha-D-glucosaminyl]-1-(1-radyl,2-acyl-sn-glycero-3-phospho)-1D-myo-inositol-binding residues include asparagine 383 and asparagine 385. Residues asparagine 385–phenylalanine 406 form a helical membrane-spanning segment. At tyrosine 407 to lysine 435 the chain is on the cytoplasmic side.

The protein belongs to the PIGU family. In terms of assembly, heteropentamer. Part of the GPI-anchor transamidase complex, consisting of PIGK, PIGT, PIGS, PIGU and GAA1.

The protein localises to the endoplasmic reticulum membrane. Its pathway is glycolipid biosynthesis; glycosylphosphatidylinositol-anchor biosynthesis. Its function is as follows. Component of the glycosylphosphatidylinositol-anchor (GPI-anchor) transamidase (GPI-T) complex that catalyzes the formation of the linkage between a proprotein and a GPI-anchor and participates in GPI anchored protein biosynthesis. Binds the lipid portion of GPI-anchor. May act as an organizer in the transmembrane layer to recruit other subunits, and thus is essential for assembly of the complex. This chain is GPI-anchor transamidase component PIGU, found in Cricetulus griseus (Chinese hamster).